A 92-amino-acid polypeptide reads, in one-letter code: Protein LSO2 (92 aa).

Basic and acidic residues-rich tracts occupy residues 1-10 (MGKRFSESAA) and 38-72 (EASK…ERDA). A disordered region spans residues 1 to 92 (MGKRFSESAA…KGGKGKRKMK (92 aa)). A coiled-coil region spans residues 17 to 80 (ARKRDQAHAK…DALLTAEEEQ (64 aa)).

This sequence belongs to the CCDC124 family. As to quaternary structure, associates with translationally inactive ribosomes in the nonrotated state. LSO2 bridges the decoding sites of the small with the GTPase activating center (GAC) of the large subunit. This position allows accommodation of the DOM34-dependent ribosome recycling system, which splits LSO2-containing ribosomes.

It is found in the nucleus. The protein localises to the cytoplasm. Functionally, ribosome-binding protein involved in ribosome hibernation by associating with translationally inactive ribosomes. Required for translational recovery after starvation from stationary phase. May facilitate rapid translation reactivation by stabilizing the recycling-competent state of inactive ribosomes. The polypeptide is Protein LSO2 (Saccharomyces cerevisiae (strain ATCC 204508 / S288c) (Baker's yeast)).